We begin with the raw amino-acid sequence, 30 residues long: U-actitoxin-Bcg2a (30 aa).

A disulfide bridge connects residues cysteine 7 and cysteine 27.

The protein resides in the secreted. It localises to the nematocyst. In terms of biological role, possible voltage-gated potassium channel (Kv) blocker. The polypeptide is U-actitoxin-Bcg2a (Bunodosoma cangicum (Sea anemone)).